The sequence spans 498 residues: MRINPTTSGPGVSTLEKKNPGRXAQIIGPVLDVAFPPGKMPNIYNALVVKGRDTVGQQVNVTCEVQQLLGNNRVRAVAMSATDGLMRGMEVIDTGAPLSVPVGGATLGRIFNVLGEPVDNLGPVDTRTTFPIHRSAPAFIQLDTKLSIFETGIKVVDLLAPYRRGGKIGLFGGAGVGKTVLIMELINNIAKAHGGVSVFGGVGERTREGNDLYMEMKESGVINEQNLAESKVALVYGQMNEPPGARMRVGLTALTMAEYFRDVNEQDVLLFIDNIFRFVQAGSEVSALLGRMPSAVGYQPTLSTEMGSLQERITSTKEGSITSIQAVYVPADDLTDPAPATTFAHLDATTVLSRGLAAKGIYPAVDPLDSTSTMLQPRIVGEEHYETAQRVKQTSQRYKELQDIIAILGLDELSEEDRLTVARARKIERFLSQPFFVAEVFTGSPGKYVGLAETIRGFQLILSGELDGLPEQAFYLVGNIDEATAKAMNLDVESXLKK.

Residue 172 to 179 (GGAGVGKT) participates in ATP binding.

Belongs to the ATPase alpha/beta chains family. As to quaternary structure, F-type ATPases have 2 components, CF(1) - the catalytic core - and CF(0) - the membrane proton channel. CF(1) has five subunits: alpha(3), beta(3), gamma(1), delta(1), epsilon(1). CF(0) has four main subunits: a(1), b(1), b'(1) and c(9-12).

The protein resides in the plastid. It is found in the chloroplast thylakoid membrane. It carries out the reaction ATP + H2O + 4 H(+)(in) = ADP + phosphate + 5 H(+)(out). Produces ATP from ADP in the presence of a proton gradient across the membrane. The catalytic sites are hosted primarily by the beta subunits. The polypeptide is ATP synthase subunit beta, chloroplastic (Aristolochia macrophylla (Dutchman's pipe vine)).